Here is a 247-residue protein sequence, read N- to C-terminus: MNVLSCSINTLKGLYDISGVEVGQHFYWQIGGFQVHGQVLITSWVVIAILLGSATIAVRNPQTIPTGGQNFFEYVLEFIRDVSKTQIGEEYGPWVPFIGTMFLFIFVSNWSGALLPWKIIQLPHGELAAPTNDINTTVALALLTSVAYFYAGLTKKGLGYFGKYIQPTPILLPINILEDFTKPLSLSFRLFGNILADELVVVVLVSLVPLVVPIPVMLLGLFTSGIQALIFATLAAAYIGESMEGHH.

5 consecutive transmembrane segments (helical) span residues Q38–V58, V95–L115, I134–T154, L199–L219, and G220–G240.

It belongs to the ATPase A chain family. In terms of assembly, F-type ATPases have 2 components, CF(1) - the catalytic core - and CF(0) - the membrane proton channel. CF(1) has five subunits: alpha(3), beta(3), gamma(1), delta(1), epsilon(1). CF(0) has four main subunits: a, b, b' and c.

Its subcellular location is the plastid. It is found in the chloroplast thylakoid membrane. Its function is as follows. Key component of the proton channel; it plays a direct role in the translocation of protons across the membrane. The sequence is that of ATP synthase subunit a, chloroplastic from Nicotiana sylvestris (Wood tobacco).